The following is a 73-amino-acid chain: MAGSGLFFKWANNKHAKSVCKPSSLQINSLEKVKPGIIPLFFNQKMEAKEPEKKTPSMEAKATSLSPNKASAS.

The interval 48 to 73 is disordered; that stretch reads AKEPEKKTPSMEAKATSLSPNKASAS. Residues 63-73 show a composition bias toward polar residues; that stretch reads TSLSPNKASAS.

This is an uncharacterized protein from Saccharomyces cerevisiae (strain ATCC 204508 / S288c) (Baker's yeast).